Reading from the N-terminus, the 188-residue chain is Elongation factor P (188 aa).

K34 carries the post-translational modification N6-(3,6-diaminohexanoyl)-5-hydroxylysine.

Belongs to the elongation factor P family. May be beta-lysylated on the epsilon-amino group of Lys-34 by the combined action of EpmA and EpmB, and then hydroxylated on the C5 position of the same residue by EpmC (if this protein is present). Lysylation is critical for the stimulatory effect of EF-P on peptide-bond formation. The lysylation moiety may extend toward the peptidyltransferase center and stabilize the terminal 3-CCA end of the tRNA. Hydroxylation of the C5 position on Lys-34 may allow additional potential stabilizing hydrogen-bond interactions with the P-tRNA.

The protein localises to the cytoplasm. It functions in the pathway protein biosynthesis; polypeptide chain elongation. Involved in peptide bond synthesis. Alleviates ribosome stalling that occurs when 3 or more consecutive Pro residues or the sequence PPG is present in a protein, possibly by augmenting the peptidyl transferase activity of the ribosome. Modification of Lys-34 is required for alleviation. The protein is Elongation factor P of Xanthomonas campestris pv. campestris (strain B100).